We begin with the raw amino-acid sequence, 213 residues long: MSILSIVLTGFGLAMDAFAVSVAKGITLTRVKAKDALKVALFFGGFQALMPLIGWGAGRYFADYIKAFDHWIAFILLSFIGGKMIFEALKEDDEEKAEVAVSMEVSKNKEREFANMKRKEELSAKNLTVLAIATSIDALAVGVSFAFLGISIVQTIIIIGIITFVLCFLGVIIGEKLGDIFKNYAEIVGGVILILIGINILLEHTGIIEKLFS.

The next 6 membrane-spanning stretches (helical) occupy residues 3 to 23, 36 to 56, 67 to 87, 130 to 150, 152 to 172, and 187 to 207; these read ILSI…VSVA, ALKV…IGWG, AFDH…MIFE, LAIA…FLGI, IVQT…LGVI, and IVGG…HTGI.

Belongs to the MntP (TC 9.B.29) family.

It localises to the cell membrane. Functionally, probably functions as a manganese efflux pump. The polypeptide is Putative manganese efflux pump MntP (Clostridium perfringens (strain 13 / Type A)).